The chain runs to 970 residues: Protein translocase subunit SecA (970 aa).

ATP-binding positions include Q99, 117-121, and D631; that span reads GEGKT.

This sequence belongs to the SecA family. Monomer and homodimer. Part of the essential Sec protein translocation apparatus which comprises SecA, SecYEG and auxiliary proteins SecDF. Other proteins may also be involved.

Its subcellular location is the cell inner membrane. The protein resides in the cytoplasm. The enzyme catalyses ATP + H2O + cellular proteinSide 1 = ADP + phosphate + cellular proteinSide 2.. Its function is as follows. Part of the Sec protein translocase complex. Interacts with the SecYEG preprotein conducting channel. Has a central role in coupling the hydrolysis of ATP to the transfer of proteins into and across the cell membrane, serving as an ATP-driven molecular motor driving the stepwise translocation of polypeptide chains across the membrane. This is Protein translocase subunit SecA from Chlamydia caviae (strain ATCC VR-813 / DSM 19441 / 03DC25 / GPIC) (Chlamydophila caviae).